A 215-amino-acid polypeptide reads, in one-letter code: LysM and putative peptidoglycan-binding domain-containing protein 2 (215 aa).

Residues 1–40 are disordered; that stretch reads MADLSPAPALREGGPRAHRPSAPSPPPRSRSTSEPEEAEL. The residue at position 2 (A2) is an N-acetylalanine. Phosphoserine occurs at positions 5, 24, 33, and 57. The 45-residue stretch at 71 to 115 folds into the LysM domain; sequence VEHRVRAGDTLQGIALKYGVTMEQIKRANKLFTNDCIFLKKTLSI. Disordered stretches follow at residues 135–176 and 195–215; these read ESET…EVSA and RKLK…LYHS. Acidic residues predominate over residues 145 to 156; that stretch reads QEEEPVVSEEEL. Residues 157–169 show a composition bias toward pro residues; sequence PPPSPQDPDPKPA. The span at 196–205 shows a compositional bias: basic and acidic residues; sequence KLKEESRDEE.

The polypeptide is LysM and putative peptidoglycan-binding domain-containing protein 2 (Lysmd2) (Mus musculus (Mouse)).